We begin with the raw amino-acid sequence, 252 residues long: Mannose-P-dolichol utilization defect 1 protein homolog (252 aa).

Residues 34–100 enclose the PQ-loop 1 domain; sequence KALLSKGLGL…HGYPFSAWGD (67 aa). 7 consecutive transmembrane segments (helical) span residues 41–61, 69–89, 98–118, 126–146, 148–168, 180–200, and 207–227; these read LGLA…LKIL, INIV…SYNF, WGDS…VLFF, GLFL…LTPM, VLFT…LSQA, LSAA…FTSI, and MIIL…GQLI. The 55-residue stretch at 157-211 folds into the PQ-loop 2 domain; it reads IPILLVGKLSQAYTNYQAGSTGQLSAATVIMMFAGSVARIFTSIQETGDFMIILT.

Belongs to the MPDU1 (TC 2.A.43.3) family.

Its subcellular location is the membrane. The polypeptide is Mannose-P-dolichol utilization defect 1 protein homolog (Drosophila melanogaster (Fruit fly)).